A 292-amino-acid chain; its full sequence is Inhibitory synaptic factor 1 (292 aa).

Disordered regions lie at residues 1–25 (MNIRGTPDLGQPSDDPSSGGERERI), 122–186 (SDSV…ERVR), and 198–292 (CDDE…KGKN). Residues 23 to 63 (ERIRQRMKMVIGQLEDILRELKEVAKELREVVSQIDKLTSD) are a coiled coil. The span at 198 to 214 (CDDEEGDGEEEAAEEEG) shows a compositional bias: acidic residues. The segment covering 263-285 (RNSSTQTVSDKSTQTVLPYTATR) has biased composition (polar residues).

The protein belongs to the INSYN1 family. Interacts with GPHN.

It is found in the postsynaptic density. In terms of biological role, component of the protein machinery at the inhibitory synapses, probably acting as a scaffold. Inhibitory synapses dampen neuronal activity through postsynaptic hyperpolarization. This synaptic inhibition is fundamental for the functioning of the central nervous system, shaping and orchestrating the flow of information through neuronal networks to generate a precise neural code. This chain is Inhibitory synaptic factor 1, found in Bos taurus (Bovine).